The primary structure comprises 228 residues: Translin (228 aa).

Positions Arg-86 to His-90 are DNA/RNA binding. The interval Leu-177 to Leu-198 is leucine-zipper. Lys-187 is subject to N6-acetyllysine. At Ser-190 the chain carries Phosphoserine. Lys-199 carries the post-translational modification N6-acetyllysine.

The protein belongs to the translin family. In terms of assembly, ring-shaped heterooctamer of six TSN and two TSNAX subunits, DNA/RNA binding occurs inside the ring.

Its subcellular location is the cytoplasm. It is found in the nucleus. Its function is as follows. DNA-binding protein that specifically recognizes consensus sequences at the breakpoint junctions in chromosomal translocations, mostly involving immunoglobulin (Ig)/T-cell receptor gene segments. Seems to recognize single-stranded DNA ends generated by staggered breaks occurring at recombination hot spots. Functionally, exhibits both single-stranded and double-stranded endoribonuclease activity. May act as an activator of RNA-induced silencing complex (RISC) by facilitating endonucleolytic cleavage of the siRNA passenger strand. This chain is Translin (Tsn), found in Mus musculus (Mouse).